A 974-amino-acid chain; its full sequence is Phosphoenolpyruvate carboxylase 1 (974 aa).

Residues His-164 and Lys-604 contribute to the active site.

This sequence belongs to the PEPCase type 1 family. Exists as a homotetramer or heterooligomer. Mg(2+) serves as cofactor.

Its subcellular location is the cytoplasm. It carries out the reaction oxaloacetate + phosphate = phosphoenolpyruvate + hydrogencarbonate. Activated by glutamine and dihydroxyacetone phosphate. Inhibited by glutamate, aspartate, 2-oxoglutarate and malate. In terms of biological role, through the carboxylation of phosphoenolpyruvate (PEP) it forms oxaloacetate, a four-carbon dicarboxylic acid source for the tricarboxylic acid cycle. This Chlamydomonas reinhardtii (Chlamydomonas smithii) protein is Phosphoenolpyruvate carboxylase 1.